Consider the following 248-residue polypeptide: Tabserin (248 aa).

Positions 1–19 are cleaved as a signal peptide; it reads MLKYSALFLYLIYVGGSES. Residues 24-248 form the Peptidase S1 domain; the sequence is IVGGVPVAEE…PYFENGLRKR (225 aa). The cysteines at positions 49 and 65 are disulfide-linked. Residues histidine 64 and aspartate 111 each act as charge relay system in the active site. Disulfide bonds link cysteine 175-cysteine 189 and cysteine 201-cysteine 226. Catalysis depends on serine 205, which acts as the Charge relay system.

The protein belongs to the peptidase S1 family. Expressed in salivary glands.

It localises to the secreted. In terms of biological role, serine protease that inhibits blood coagulation in a dose-dependent manner. May act by destroying coagulant factors to inhibit blood coagulation. The chain is Tabserin from Tabanus yao (Horsefly).